A 130-amino-acid polypeptide reads, in one-letter code: Fumarate reductase subunit C (130 aa).

Transmembrane regions (helical) follow at residues 33–53 (AVTT…LKGG), 60–80 (FVTF…LLGA), and 109–129 (VIKL…GIAL).

Belongs to the FrdC family. In terms of assembly, part of an enzyme complex containing four subunits: a flavoprotein (FrdA), an iron-sulfur protein (FrdB), and two hydrophobic anchor proteins (FrdC and FrdD).

It is found in the cell inner membrane. In terms of biological role, two distinct, membrane-bound, FAD-containing enzymes are responsible for the catalysis of fumarate and succinate interconversion; fumarate reductase is used in anaerobic growth, and succinate dehydrogenase is used in aerobic growth. Anchors the catalytic components of the fumarate reductase complex to the cell inner membrane, binds quinones. The sequence is that of Fumarate reductase subunit C from Photorhabdus laumondii subsp. laumondii (strain DSM 15139 / CIP 105565 / TT01) (Photorhabdus luminescens subsp. laumondii).